A 194-amino-acid polypeptide reads, in one-letter code: Fibroblast growth factor 7 (194 aa).

The signal sequence occupies residues 1–31 (MRKWILTRILPTPLYRPCFHLVCLVGTISLA). 2 N-linked (GlcNAc...) asparagine glycosylation sites follow: asparagine 45 and asparagine 149.

Belongs to the heparin-binding growth factors family. In terms of assembly, interacts with FGFBP1. Interacts with FGFR2. Affinity between fibroblast growth factors (FGFs) and their receptors is increased by heparan sulfate glycosaminoglycans that function as coreceptors.

Functionally, growth factor active on keratinocytes. Possible major paracrine effector of normal epithelial cell proliferation. This Rattus norvegicus (Rat) protein is Fibroblast growth factor 7 (Fgf7).